A 221-amino-acid chain; its full sequence is Urease accessory protein UreF (221 aa).

It belongs to the UreF family. UreD, UreF and UreG form a complex that acts as a GTP-hydrolysis-dependent molecular chaperone, activating the urease apoprotein by helping to assemble the nickel containing metallocenter of UreC. The UreE protein probably delivers the nickel.

Its subcellular location is the cytoplasm. Functionally, required for maturation of urease via the functional incorporation of the urease nickel metallocenter. This Aliivibrio fischeri (strain ATCC 700601 / ES114) (Vibrio fischeri) protein is Urease accessory protein UreF.